The primary structure comprises 156 residues: ATP synthase subunit b (156 aa).

Residues 7 to 27 (LFAQMIVFFVLWWVVARFVWP) traverse the membrane as a helical segment.

Belongs to the ATPase B chain family. As to quaternary structure, F-type ATPases have 2 components, F(1) - the catalytic core - and F(0) - the membrane proton channel. F(1) has five subunits: alpha(3), beta(3), gamma(1), delta(1), epsilon(1). F(0) has three main subunits: a(1), b(2) and c(10-14). The alpha and beta chains form an alternating ring which encloses part of the gamma chain. F(1) is attached to F(0) by a central stalk formed by the gamma and epsilon chains, while a peripheral stalk is formed by the delta and b chains.

It is found in the cell inner membrane. Its function is as follows. F(1)F(0) ATP synthase produces ATP from ADP in the presence of a proton or sodium gradient. F-type ATPases consist of two structural domains, F(1) containing the extramembraneous catalytic core and F(0) containing the membrane proton channel, linked together by a central stalk and a peripheral stalk. During catalysis, ATP synthesis in the catalytic domain of F(1) is coupled via a rotary mechanism of the central stalk subunits to proton translocation. Functionally, component of the F(0) channel, it forms part of the peripheral stalk, linking F(1) to F(0). The chain is ATP synthase subunit b from Polynucleobacter necessarius subsp. necessarius (strain STIR1).